Reading from the N-terminus, the 272-residue chain is 2-C-methyl-D-erythritol 4-phosphate cytidylyltransferase (272 aa).

This sequence belongs to the IspD/TarI cytidylyltransferase family. IspD subfamily.

It carries out the reaction 2-C-methyl-D-erythritol 4-phosphate + CTP + H(+) = 4-CDP-2-C-methyl-D-erythritol + diphosphate. The protein operates within isoprenoid biosynthesis; isopentenyl diphosphate biosynthesis via DXP pathway; isopentenyl diphosphate from 1-deoxy-D-xylulose 5-phosphate: step 2/6. Catalyzes the formation of 4-diphosphocytidyl-2-C-methyl-D-erythritol from CTP and 2-C-methyl-D-erythritol 4-phosphate (MEP). This chain is 2-C-methyl-D-erythritol 4-phosphate cytidylyltransferase, found in Xanthomonas oryzae pv. oryzae (strain PXO99A).